We begin with the raw amino-acid sequence, 115 residues long: Replication initiation control protein YabA (115 aa).

Positions 86, 88, 102, and 105 each coordinate Zn(2+).

It belongs to the YabA family. Homotetramer. Interacts with both DnaA and DnaN, acting as a bridge between these two proteins. Zn(2+) is required as a cofactor.

Its subcellular location is the cytoplasm. It localises to the nucleoid. Involved in control of chromosome replication initiation. Inhibits the cooperative binding of DnaA to the oriC region, thus negatively regulating initiation of chromosome replication. Inhibits the ability of DnaA-ATP to form a helix on DNA; does not disassemble preformed DnaA-DNA helices. Decreases the residence time of DnaA on the chromosome at its binding sites (oriC, replication forks and promoter-binding sites). Tethers DnaA to the replication machinery via the DNA polymerase beta sliding clamp subunit (dnaN). Associates with oriC and other DnaA targets on the chromosome in a DnaA-dependent manner. This Enterococcus faecalis (strain ATCC 700802 / V583) protein is Replication initiation control protein YabA.